Here is a 771-residue protein sequence, read N- to C-terminus: Probable dipeptidyl peptidase 4 (771 aa).

The first 16 residues, 1–16 (MKYSKLLLLLVSVVQA), serve as a signal peptide directing secretion. Residues N37, N80, N114, N173, N222, N470, and N495 are each glycosylated (N-linked (GlcNAc...) asparagine). Residues S618, D695, and H730 each act as charge relay system in the active site.

This sequence belongs to the peptidase S9B family.

It localises to the secreted. It catalyses the reaction Release of an N-terminal dipeptide, Xaa-Yaa-|-Zaa-, from a polypeptide, preferentially when Yaa is Pro, provided Zaa is neither Pro nor hydroxyproline.. Functionally, extracellular dipeptidyl-peptidase which removes N-terminal dipeptides sequentially from polypeptides having unsubstituted N-termini provided that the penultimate residue is proline. The chain is Probable dipeptidyl peptidase 4 (dpp4) from Aspergillus flavus (strain ATCC 200026 / FGSC A1120 / IAM 13836 / NRRL 3357 / JCM 12722 / SRRC 167).